Reading from the N-terminus, the 944-residue chain is Putative alpha,alpha-trehalose-phosphate synthase [UDP-forming] 106 kDa subunit (944 aa).

Over residues 73–84 the composition is skewed to polar residues; sequence TNAQSNIATPSP. Disordered regions lie at residues 73–113 and 129–166; these read TNAQ…NSLS and SKND…SELE. Over residues 101 to 113 the composition is skewed to low complexity; it reads PSSDSPSLENSLS. Ser-141, Ser-145, Ser-149, Ser-150, Ser-163, and Ser-177 each carry phosphoserine. The interval 173-652 is glycosyltransferase; that stretch reads SRSLSFSMNG…AVTFQSLIKE (480 aa). Position 189 is a phosphothreonine (Thr-189).

The protein in the N-terminal section; belongs to the glycosyltransferase 20 family.

The enzyme catalyses D-glucose 6-phosphate + UDP-alpha-D-glucose = alpha,alpha-trehalose 6-phosphate + UDP + H(+). This Schizosaccharomyces pombe (strain 972 / ATCC 24843) (Fission yeast) protein is Putative alpha,alpha-trehalose-phosphate synthase [UDP-forming] 106 kDa subunit.